Reading from the N-terminus, the 440-residue chain is Ribulose bisphosphate carboxylase large chain (440 aa).

An N6,N6,N6-trimethyllysine modification is found at lysine 4. The substrate site is built by asparagine 113 and threonine 163. Catalysis depends on lysine 165, which acts as the Proton acceptor. Lysine 167 contributes to the substrate binding site. Positions 191, 193, and 194 each coordinate Mg(2+). Residue lysine 191 is modified to N6-carboxylysine. Histidine 284 functions as the Proton acceptor in the catalytic mechanism. Positions 285, 317, and 369 each coordinate substrate.

It belongs to the RuBisCO large chain family. Type I subfamily. In terms of assembly, heterohexadecamer of 8 large chains and 8 small chains; disulfide-linked. The disulfide link is formed within the large subunit homodimers. The cofactor is Mg(2+). The disulfide bond which can form in the large chain dimeric partners within the hexadecamer appears to be associated with oxidative stress and protein turnover.

It is found in the plastid. The protein localises to the chloroplast. It catalyses the reaction 2 (2R)-3-phosphoglycerate + 2 H(+) = D-ribulose 1,5-bisphosphate + CO2 + H2O. The catalysed reaction is D-ribulose 1,5-bisphosphate + O2 = 2-phosphoglycolate + (2R)-3-phosphoglycerate + 2 H(+). RuBisCO catalyzes two reactions: the carboxylation of D-ribulose 1,5-bisphosphate, the primary event in carbon dioxide fixation, as well as the oxidative fragmentation of the pentose substrate in the photorespiration process. Both reactions occur simultaneously and in competition at the same active site. The polypeptide is Ribulose bisphosphate carboxylase large chain (Dicksonia antarctica (Australian tree fern)).